Consider the following 567-residue polypeptide: 2-succinyl-5-enolpyruvyl-6-hydroxy-3-cyclohexene-1-carboxylate synthase (567 aa).

The protein belongs to the TPP enzyme family. MenD subfamily. In terms of assembly, homodimer. Mg(2+) serves as cofactor. It depends on Mn(2+) as a cofactor. The cofactor is thiamine diphosphate.

It catalyses the reaction isochorismate + 2-oxoglutarate + H(+) = 5-enolpyruvoyl-6-hydroxy-2-succinyl-cyclohex-3-ene-1-carboxylate + CO2. The protein operates within quinol/quinone metabolism; 1,4-dihydroxy-2-naphthoate biosynthesis; 1,4-dihydroxy-2-naphthoate from chorismate: step 2/7. Its pathway is quinol/quinone metabolism; menaquinone biosynthesis. Catalyzes the thiamine diphosphate-dependent decarboxylation of 2-oxoglutarate and the subsequent addition of the resulting succinic semialdehyde-thiamine pyrophosphate anion to isochorismate to yield 2-succinyl-5-enolpyruvyl-6-hydroxy-3-cyclohexene-1-carboxylate (SEPHCHC). This Yersinia pestis bv. Antiqua (strain Antiqua) protein is 2-succinyl-5-enolpyruvyl-6-hydroxy-3-cyclohexene-1-carboxylate synthase.